The primary structure comprises 507 residues: Probable cytosol aminopeptidase (507 aa).

Mn(2+) is bound by residues K271 and D276. The active site involves K283. D294, D353, and E355 together coordinate Mn(2+). R357 is an active-site residue.

This sequence belongs to the peptidase M17 family. It depends on Mn(2+) as a cofactor.

It localises to the cytoplasm. The enzyme catalyses Release of an N-terminal amino acid, Xaa-|-Yaa-, in which Xaa is preferably Leu, but may be other amino acids including Pro although not Arg or Lys, and Yaa may be Pro. Amino acid amides and methyl esters are also readily hydrolyzed, but rates on arylamides are exceedingly low.. The catalysed reaction is Release of an N-terminal amino acid, preferentially leucine, but not glutamic or aspartic acids.. In terms of biological role, presumably involved in the processing and regular turnover of intracellular proteins. Catalyzes the removal of unsubstituted N-terminal amino acids from various peptides. The chain is Probable cytosol aminopeptidase from Nitratidesulfovibrio vulgaris (strain ATCC 29579 / DSM 644 / CCUG 34227 / NCIMB 8303 / VKM B-1760 / Hildenborough) (Desulfovibrio vulgaris).